Consider the following 130-residue polypeptide: MRPGSSPRAPECGAPALPRPQLDRLPARPAPSRGRGAPSLRWPAKEVGPRPQIPATCEPGKVCGASAGRRDAARPSRPRSSRVTFSTRRQPGPQRGRWGLRGGPESVRGLPHLGLRISGTPLGIFSSWSL.

Positions 1-104 (MRPGSSPRAP…RGRWGLRGGP (104 aa)) are disordered. A compositionally biased stretch (low complexity) spans 88 to 97 (RRQPGPQRGR).

This is an uncharacterized protein from Homo sapiens (Human).